Reading from the N-terminus, the 336-residue chain is tRNA N6-adenosine threonylcarbamoyltransferase (336 aa).

The Fe cation site is built by His110 and His114. Substrate is bound by residues 133 to 137 (LVSGK), Asp166, Gly179, and Asn271. Asp300 contributes to the Fe cation binding site.

It belongs to the KAE1 / TsaD family. Fe(2+) serves as cofactor.

It localises to the cytoplasm. It carries out the reaction L-threonylcarbamoyladenylate + adenosine(37) in tRNA = N(6)-L-threonylcarbamoyladenosine(37) in tRNA + AMP + H(+). In terms of biological role, required for the formation of a threonylcarbamoyl group on adenosine at position 37 (t(6)A37) in tRNAs that read codons beginning with adenine. Is involved in the transfer of the threonylcarbamoyl moiety of threonylcarbamoyl-AMP (TC-AMP) to the N6 group of A37, together with TsaE and TsaB. TsaD likely plays a direct catalytic role in this reaction. This Buchnera aphidicola subsp. Acyrthosiphon pisum (strain 5A) protein is tRNA N6-adenosine threonylcarbamoyltransferase.